A 155-amino-acid polypeptide reads, in one-letter code: 6,7-dimethyl-8-ribityllumazine synthase (155 aa).

Residues tyrosine 23, 57 to 59 (AWE), and 81 to 83 (CVI) contribute to the 5-amino-6-(D-ribitylamino)uracil site. Position 86 to 87 (86 to 87 (ET)) interacts with (2S)-2-hydroxy-3-oxobutyl phosphate. The Proton donor role is filled by histidine 89. Phenylalanine 114 provides a ligand contact to 5-amino-6-(D-ribitylamino)uracil. Arginine 128 is a (2S)-2-hydroxy-3-oxobutyl phosphate binding site.

The protein belongs to the DMRL synthase family.

The catalysed reaction is (2S)-2-hydroxy-3-oxobutyl phosphate + 5-amino-6-(D-ribitylamino)uracil = 6,7-dimethyl-8-(1-D-ribityl)lumazine + phosphate + 2 H2O + H(+). Its pathway is cofactor biosynthesis; riboflavin biosynthesis; riboflavin from 2-hydroxy-3-oxobutyl phosphate and 5-amino-6-(D-ribitylamino)uracil: step 1/2. Functionally, catalyzes the formation of 6,7-dimethyl-8-ribityllumazine by condensation of 5-amino-6-(D-ribitylamino)uracil with 3,4-dihydroxy-2-butanone 4-phosphate. This is the penultimate step in the biosynthesis of riboflavin. This chain is 6,7-dimethyl-8-ribityllumazine synthase, found in Rhodopirellula baltica (strain DSM 10527 / NCIMB 13988 / SH1).